Consider the following 326-residue polypeptide: Siroheme decarboxylase NirDL subunit (326 aa).

It belongs to the Ahb/Nir family. In terms of assembly, forms a complex composed of NirDL, NirG and NirH. All proteins are required for the total conversion of siroheme to didecarboxysiroheme.

The enzyme catalyses siroheme + 2 H(+) = 12,18-didecarboxysiroheme + 2 CO2. It functions in the pathway porphyrin-containing compound metabolism. In terms of biological role, involved in heme d1 biosynthesis. Catalyzes the decarboxylation of siroheme into didecarboxysiroheme. Siroheme is probably decarboxylated to monodecarboxysiroheme, which is in turn decarboxylated to didecarboxysiroheme. The protein is Siroheme decarboxylase NirDL subunit of Paracoccus pantotrophus (Thiosphaera pantotropha).